We begin with the raw amino-acid sequence, 512 residues long: Histidine ammonia-lyase (512 aa).

The 5-imidazolinone (Ala-Gly) cross-link spans 142-144; it reads ASG. The residue at position 143 (serine 143) is a 2,3-didehydroalanine (Ser).

Belongs to the PAL/histidase family. In terms of processing, contains an active site 4-methylidene-imidazol-5-one (MIO), which is formed autocatalytically by cyclization and dehydration of residues Ala-Ser-Gly.

The protein resides in the cytoplasm. The catalysed reaction is L-histidine = trans-urocanate + NH4(+). Its pathway is amino-acid degradation; L-histidine degradation into L-glutamate; N-formimidoyl-L-glutamate from L-histidine: step 1/3. This chain is Histidine ammonia-lyase, found in Bartonella tribocorum (strain CIP 105476 / IBS 506).